Here is a 253-residue protein sequence, read N- to C-terminus: MIEIGKTIIKFPPLIEGILIKRYKRFLADIELDDGEVVTAHCANTGPMKGVLWPGGRVRLKYSPSPKRKLDWSWEQAEVPSHNEKKKCWVGINTSLPNKLIKHLIEANCLERQFGQISSIKPEVVYGLERKSRIDLLLYPSIQNEDSRKIFVEVKNTTWCDDSLALFPDTVTTRGQKHLKELMSVYPDSRAVLIPCISRSDMELFSPGEIADPEYGRLFREALTKGVEVIPCAFGFFIDHITWEGTRPLKSSR.

Belongs to the SfsA family.

This is Sugar fermentation stimulation protein homolog from Prochlorococcus marinus (strain NATL1A).